Reading from the N-terminus, the 339-residue chain is uncharacterized protein (339 aa).

Residues histidine 17, histidine 19, histidine 197, and aspartate 278 each contribute to the Zn(2+) site. Aspartate 279 provides a ligand contact to substrate.

It belongs to the metallo-dependent hydrolases superfamily. Adenosine and AMP deaminases family. Adenine deaminase type 2 subfamily. Requires Zn(2+) as cofactor.

It localises to the cytoplasm. It is found in the nucleus. This is an uncharacterized protein from Schizosaccharomyces pombe (strain 972 / ATCC 24843) (Fission yeast).